The sequence spans 100 residues: NADH-quinone oxidoreductase subunit K (100 aa).

The next 3 helical transmembrane spans lie at 4 to 24, 28 to 48, and 60 to 80; these read LQHGLILAAILFVLGLTGLLV, LLFMLISLEVMINAAALAFIV, and VMYILAISLAAAEASIGLALL.

The protein belongs to the complex I subunit 4L family. NDH-1 is composed of 13 different subunits. Subunits NuoA, H, J, K, L, M, N constitute the membrane sector of the complex.

It is found in the cell inner membrane. It catalyses the reaction a quinone + NADH + 5 H(+)(in) = a quinol + NAD(+) + 4 H(+)(out). In terms of biological role, NDH-1 shuttles electrons from NADH, via FMN and iron-sulfur (Fe-S) centers, to quinones in the respiratory chain. The immediate electron acceptor for the enzyme in this species is believed to be ubiquinone. Couples the redox reaction to proton translocation (for every two electrons transferred, four hydrogen ions are translocated across the cytoplasmic membrane), and thus conserves the redox energy in a proton gradient. The polypeptide is NADH-quinone oxidoreductase subunit K (Serratia proteamaculans (strain 568)).